A 340-amino-acid polypeptide reads, in one-letter code: tRNA N6-adenosine threonylcarbamoyltransferase (340 aa).

Residues His-111 and His-115 each coordinate Fe cation. Substrate-binding positions include 133 to 137 (VVSGG), Asp-166, Gly-179, Asp-183, and Asn-273. Position 301 (Asp-301) interacts with Fe cation.

This sequence belongs to the KAE1 / TsaD family. Requires Fe(2+) as cofactor.

The protein localises to the cytoplasm. It catalyses the reaction L-threonylcarbamoyladenylate + adenosine(37) in tRNA = N(6)-L-threonylcarbamoyladenosine(37) in tRNA + AMP + H(+). Functionally, required for the formation of a threonylcarbamoyl group on adenosine at position 37 (t(6)A37) in tRNAs that read codons beginning with adenine. Is involved in the transfer of the threonylcarbamoyl moiety of threonylcarbamoyl-AMP (TC-AMP) to the N6 group of A37, together with TsaE and TsaB. TsaD likely plays a direct catalytic role in this reaction. The polypeptide is tRNA N6-adenosine threonylcarbamoyltransferase (Pelobacter propionicus (strain DSM 2379 / NBRC 103807 / OttBd1)).